A 222-amino-acid polypeptide reads, in one-letter code: Sugar fermentation stimulation protein homolog (222 aa).

The protein belongs to the SfsA family.

In Thermotoga petrophila (strain ATCC BAA-488 / DSM 13995 / JCM 10881 / RKU-1), this protein is Sugar fermentation stimulation protein homolog.